Reading from the N-terminus, the 243-residue chain is Probable transcriptional regulatory protein BB_0025 (243 aa).

It belongs to the TACO1 family.

Its subcellular location is the cytoplasm. In Borreliella burgdorferi (strain ATCC 35210 / DSM 4680 / CIP 102532 / B31) (Borrelia burgdorferi), this protein is Probable transcriptional regulatory protein BB_0025.